The following is a 1086-amino-acid chain: Sterol regulatory element-binding protein cleavage-activating protein (1086 aa).

Residues 1 to 35 lie on the Cytoplasmic side of the membrane; the sequence is MRIFTLGKGRISRGYARQVNPSLFAKYSYCIANNP. Residues 36 to 56 form a helical membrane-spanning segment; sequence WYFILVFTLLSITGIYSSLVA. The Lumenal segment spans residues 57 to 229; that stretch reads YQQSLYDQSL…TVVARIPDLT (173 aa). N-linked (GlcNAc...) asparagine glycans are attached at residues Asn-94 and Asn-168. Residues 230-250 traverse the membrane as a helical segment; sequence VIYRWYLWVGFGVGLFAYLYL. The region spanning 233–391 is the SSD domain; sequence RWYLWVGFGV…GSFFLAVLSV (159 aa). Topologically, residues 251–265 are cytoplasmic; the sequence is SLVRLHDIRAKFGLT. A helical membrane pass occupies residues 266-286; it reads ATIFIQSGTAYFSTCSLLYFF. The Lumenal portion of the chain corresponds to 287 to 290; the sequence is ERTG. Residues 291 to 311 traverse the membrane as a helical segment; it reads PICPWPMAYYIIIFMDIENSF. Residues 312 to 337 lie on the Cytoplasmic side of the membrane; that stretch reads RLLRAVIASPQTKRVPSRIMEGFSST. Residues 338-358 form a helical membrane-spanning segment; it reads IIASFSSLLKKLLTLFVLSFF. The Lumenal segment spans residues 359–367; it reads VYPLVQEFC. The helical transmembrane segment at 368-388 threads the bilayer; that stretch reads LFLACSFVVSFLLHGSFFLAV. The Cytoplasmic portion of the chain corresponds to 389-422; sequence LSVDIRRLELQDFLDSNSSNRNSKWWVPYLEYVR. Residues 396-401 carry the ER export signal motif; the sequence is LELQDF. The helical transmembrane segment at 423 to 443 threads the bilayer; sequence FMWSPWIIDNLGTVSFHMYVI. Residues 444–544 lie on the Lumenal side of the membrane; the sequence is YLQLQSSTDI…FHDRRVWRWS (101 aa). N-linked (GlcNAc...) asparagine glycosylation occurs at Asn-454. A helical membrane pass occupies residues 545 to 565; it reads TFFSILFAIDFAVGLLVKALL. Residues 566–1086 are Cytoplasmic-facing; it reads RGWSDHDELS…QRKRSGTIGC (521 aa). 5 WD repeats span residues 593–632, 637–675, 680–727, 736–776, and 963–1009; these read HHQL…TKLV, QMPR…LMLQ, CKPN…EGAD, LSSP…WSPK, and GHYN…KKHR. The tract at residues 640-1086 is interaction with sre1; sequence RTLKAIALDP…QRKRSGTIGC (447 aa).

Belongs to the WD repeat SCAP family. As to quaternary structure, forms a tight complex with scp1, composed of 4 copies of scp1 and 4 copies of sre1.

It is found in the endoplasmic reticulum membrane. Its subcellular location is the golgi apparatus membrane. Escort protein required for sre1 processing at low sterol as well as oxygen levels. May regulate export of the scp1/sre1 complex from the ER at low sterol or oxygen levels. 4-methyl sterols bound to scp1 may mask an ER export signal in scp1 leading to retention of the complex in the ER. Release of 4-methyl sterols may trigger a conformational change in the SSD domain of scp1 unmasking the ER export signal leading to recruitment into COPII-coated vesicles, transport to the Golgi complex, proteolytic cleavage of sre1 in the Golgi, release of the transcription factor fragment of sre1 from the membrane, its import into the nucleus and up-regulation of genes required for ergosterol biosynthesis as well as anaerobic growth. Binds 4-methyl sterols. The polypeptide is Sterol regulatory element-binding protein cleavage-activating protein (Schizosaccharomyces pombe (strain 972 / ATCC 24843) (Fission yeast)).